A 398-amino-acid polypeptide reads, in one-letter code: MYLVESKGGAIACMLLALLSLGTWPAVLTLLERRGRLPQHTYLDYSITNLLAAIIIAFTFGQIGSTKPDSPNFITQLAQDNWPSVMFAMAGGIVLSLGNLSTQYAWALVGLSVTEVITSSITVVIGSTLNYFLDDKINKAEILFPGVACFLIAVCLGSAVHRSNADDNKAKLRDFETAKQEASGPSTEIGTNSSKDLETNVTTKPKEGTARFLIELENTRAIKVFGKRKIIGLAITFFAGLCFSLFSPAFNLATNDQWNRLKQGVPKLVVYTAFFYFSVSCFIIALILNVVFLYYPVLGLPKSSFKAYLNDWNGRYWAFLAGFLCGFGNGLQFMGGQAAGYAAADSVQALPLVSTFWGVVLFGEYRRSSRKTYLLLFCMLFMFISAVAVLMASSGHRK.

The Extracellular segment spans residues 1–10; sequence MYLVESKGGA. The chain crosses the membrane as a helical span at residues 11 to 31; that stretch reads IACMLLALLSLGTWPAVLTLL. Topologically, residues 32-44 are cytoplasmic; the sequence is ERRGRLPQHTYLD. Residues 45–65 form a helical membrane-spanning segment; that stretch reads YSITNLLAAIIIAFTFGQIGS. The Extracellular segment spans residues 66 to 81; that stretch reads TKPDSPNFITQLAQDN. The helical transmembrane segment at 82–102 threads the bilayer; the sequence is WPSVMFAMAGGIVLSLGNLST. The Cytoplasmic portion of the chain corresponds to 103–104; the sequence is QY. The chain crosses the membrane as a helical span at residues 105-125; the sequence is AWALVGLSVTEVITSSITVVI. Topologically, residues 126–139 are extracellular; that stretch reads GSTLNYFLDDKINK. Residues 140 to 160 form a helical membrane-spanning segment; sequence AEILFPGVACFLIAVCLGSAV. Topologically, residues 161-229 are cytoplasmic; it reads HRSNADDNKA…RAIKVFGKRK (69 aa). Positions 176–200 are disordered; sequence ETAKQEASGPSTEIGTNSSKDLETN. The segment covering 183-200 has biased composition (polar residues); sequence SGPSTEIGTNSSKDLETN. Position 221–228 (221–228) interacts with ATP; it reads AIKVFGKR. A helical membrane pass occupies residues 230–250; that stretch reads IIGLAITFFAGLCFSLFSPAF. The Extracellular portion of the chain corresponds to 251-272; that stretch reads NLATNDQWNRLKQGVPKLVVYT. The helical transmembrane segment at 273–293 threads the bilayer; it reads AFFYFSVSCFIIALILNVVFL. The Cytoplasmic portion of the chain corresponds to 294-315; sequence YYPVLGLPKSSFKAYLNDWNGR. Residues 316 to 336 form a helical membrane-spanning segment; sequence YWAFLAGFLCGFGNGLQFMGG. The Extracellular segment spans residues 337 to 341; sequence QAAGY. A helical membrane pass occupies residues 342–362; that stretch reads AAADSVQALPLVSTFWGVVLF. At 363–371 the chain is on the cytoplasmic side; that stretch reads GEYRRSSRK. The helical transmembrane segment at 372-392 threads the bilayer; the sequence is TYLLLFCMLFMFISAVAVLMA. Topologically, residues 393–398 are extracellular; that stretch reads SSGHRK.

This sequence belongs to the plant ureide permease (TC 2.A.7.19) family. Expressed in root xylem, cotyledons and leaves. Expressed in leaf blades, petioles, trichomes, stems, flower stigma, the upper part of pedicels, sepals, and the top and bottom parts of carpels in siliques.

The protein resides in the membrane. Functionally, proton-coupled transporter that transports a wide spectrum of oxo derivatives of heterocyclic nitrogen compounds, including allantoin, uric acid and xanthine, but not adenine. Mediates high affinity transport of uracil and 5-fluorouracil (a toxic uracil analog). Mediates transport of free pyrimidines and may function during early seedling development in salvage pathways, by the utilization of pyrimidines from seed storage tissue. This is Ureide permease 2 from Arabidopsis thaliana (Mouse-ear cress).